We begin with the raw amino-acid sequence, 72 residues long: Translation initiation factor IF-1 (72 aa).

Residues 1-72 (MAKDDVIEID…DKGRITFRYK (72 aa)) form the S1-like domain.

The protein belongs to the IF-1 family. In terms of assembly, component of the 30S ribosomal translation pre-initiation complex which assembles on the 30S ribosome in the order IF-2 and IF-3, IF-1 and N-formylmethionyl-tRNA(fMet); mRNA recruitment can occur at any time during PIC assembly.

Its subcellular location is the cytoplasm. In terms of biological role, one of the essential components for the initiation of protein synthesis. Stabilizes the binding of IF-2 and IF-3 on the 30S subunit to which N-formylmethionyl-tRNA(fMet) subsequently binds. Helps modulate mRNA selection, yielding the 30S pre-initiation complex (PIC). Upon addition of the 50S ribosomal subunit IF-1, IF-2 and IF-3 are released leaving the mature 70S translation initiation complex. The protein is Translation initiation factor IF-1 of Sulfurovum sp. (strain NBC37-1).